A 274-amino-acid polypeptide reads, in one-letter code: MAARPLWKGQITFGLVNVPVSLYPAVGKTEIHFHLLDSRNMARVRYERVNEETGEEVPWNEIVKAYEYNGGDYVIVEEKELKKAAPESTQSIEIESFIPRRELDCVYFDKPYYLVPVKNGEKGYVILREVLKKTKTVGIARIVIRSKQYLAAVFPYQKGIMVNLLRFAQEFRKTDELNLPTQDIKKYKITPKELSIAEQLVNAMLTQWKPEKYHDEFRAKIMKWVEAKIKTGKTISIEKEEAAPVSTNVVDFMQLLKKSIQEKEKTKKHASGSR.

In terms of domain architecture, Ku spans 11 to 195; that stretch reads ITFGLVNVPV…KYKITPKELS (185 aa).

This sequence belongs to the prokaryotic Ku family. In terms of assembly, homodimer. Interacts with LigD.

Functionally, with LigD forms a non-homologous end joining (NHEJ) DNA repair enzyme, which repairs dsDNA breaks with reduced fidelity. Binds linear dsDNA with 5'- and 3'- overhangs but not closed circular dsDNA nor ssDNA. Recruits and stimulates the ligase activity of LigD. This is Non-homologous end joining protein Ku from Coxiella burnetii (strain RSA 331 / Henzerling II).